A 382-amino-acid polypeptide reads, in one-letter code: uncharacterized protein (382 aa).

The helical transmembrane segment at 1-21 threads the bilayer; the sequence is MKIILVVFVLIFVGVIGFNMI.

This sequence belongs to the membrane fusion protein (MFP) (TC 8.A.1) family.

It localises to the membrane. This is an uncharacterized protein from Haemophilus influenzae (strain ATCC 51907 / DSM 11121 / KW20 / Rd).